Reading from the N-terminus, the 288-residue chain is Bifunctional protein FolD (288 aa).

NADP(+) contacts are provided by residues 166 to 168 (GRS), S191, and I232.

It belongs to the tetrahydrofolate dehydrogenase/cyclohydrolase family. As to quaternary structure, homodimer.

The catalysed reaction is (6R)-5,10-methylene-5,6,7,8-tetrahydrofolate + NADP(+) = (6R)-5,10-methenyltetrahydrofolate + NADPH. It carries out the reaction (6R)-5,10-methenyltetrahydrofolate + H2O = (6R)-10-formyltetrahydrofolate + H(+). It participates in one-carbon metabolism; tetrahydrofolate interconversion. Catalyzes the oxidation of 5,10-methylenetetrahydrofolate to 5,10-methenyltetrahydrofolate and then the hydrolysis of 5,10-methenyltetrahydrofolate to 10-formyltetrahydrofolate. This is Bifunctional protein FolD from Rickettsia africae (strain ESF-5).